The chain runs to 348 residues: Centromere protein N-A (348 aa).

Belongs to the CENP-N/CHL4 family.

Its subcellular location is the nucleus. The protein localises to the chromosome. It is found in the centromere. Probable component of a centromeric complex involved in assembly of kinetochore proteins, mitotic progression and chromosome segregation. The protein is Centromere protein N-A (cenpn-a) of Xenopus laevis (African clawed frog).